Here is a 304-residue protein sequence, read N- to C-terminus: Syntaxin-132 (304 aa).

Residue methionine 1 is modified to N-acetylmethionine. Positions 1–30 (MNDLLKGSFELPRGQSSREGDVELGEQQGG) are disordered. Over 1-275 (MNDLLKGSFE…AKSLQKNSRK (275 aa)) the chain is Cytoplasmic. Coiled coils occupy residues 34 to 67 (LEDF…ESKS) and 129 to 162 (TLSL…DRRV). The region spanning 204–266 (LAEIQERHDA…QSGNTALQRA (63 aa)) is the t-SNARE coiled-coil homology domain. Residues 276–296 (WMCIAIIILLIVVAVIVVGVL) traverse the membrane as a helical; Anchor for type IV membrane protein segment. The Vesicular portion of the chain corresponds to 297 to 304 (KPWKNKSA).

It belongs to the syntaxin family. As to quaternary structure, part of the t-SNARE complex. As to expression, widely expressed in all tissues throughout plant development.

It is found in the cell membrane. Vesicle trafficking protein that functions in the secretory pathway. Acts in coordination with SYP123 to mediate tip-focused membrane trafficking for root hair tip growth. Functions in root hair elongation by forming SNARE complexes with VAMP721,VAMP722 or VAMP724. Involved in cytokinesis. Acts as a cell plate-specific syntaxin, required for the fusion of vesicles at the plane of cell division. Required for secretory trafficking to the plasma membrane during interphase. Involved in the regulation of density of the H(+) ATPase proteins at the plasma membrane of root and shoot in epidermal cells. Modulation of SYP132 expression by auxin affects clathrin-sensitive H(+) ATPase traffic from the plasma membrane, and influences apoplastic acidification and plant growth. The chain is Syntaxin-132 from Arabidopsis thaliana (Mouse-ear cress).